The following is a 427-amino-acid chain: Light-independent protochlorophyllide reductase subunit N (427 aa).

Cys-28, Cys-53, and Cys-114 together coordinate [4Fe-4S] cluster.

It belongs to the BchN/ChlN family. Protochlorophyllide reductase is composed of three subunits; BchL, BchN and BchB. Forms a heterotetramer of two BchB and two BchN subunits. [4Fe-4S] cluster serves as cofactor.

It carries out the reaction chlorophyllide a + oxidized 2[4Fe-4S]-[ferredoxin] + 2 ADP + 2 phosphate = protochlorophyllide a + reduced 2[4Fe-4S]-[ferredoxin] + 2 ATP + 2 H2O. It participates in porphyrin-containing compound metabolism; bacteriochlorophyll biosynthesis (light-independent). In terms of biological role, component of the dark-operative protochlorophyllide reductase (DPOR) that uses Mg-ATP and reduced ferredoxin to reduce ring D of protochlorophyllide (Pchlide) to form chlorophyllide a (Chlide). This reaction is light-independent. The NB-protein (BchN-BchB) is the catalytic component of the complex. In Jannaschia sp. (strain CCS1), this protein is Light-independent protochlorophyllide reductase subunit N.